Reading from the N-terminus, the 82-residue chain is Sec-independent protein translocase protein TatA (82 aa).

Residues 1–21 (MGSFSIWHWLIVLLIVVMVFG) traverse the membrane as a helical segment. The tract at residues 46-82 (GASTDDSATTSAPAGQVTNNSTAADKTTIDVEAKHKS) is disordered. Residues 49–70 (TDDSATTSAPAGQVTNNSTAAD) are compositionally biased toward polar residues. A compositionally biased stretch (basic and acidic residues) spans 72 to 82 (TTIDVEAKHKS).

Belongs to the TatA/E family. In terms of assembly, the Tat system comprises two distinct complexes: a TatABC complex, containing multiple copies of TatA, TatB and TatC subunits, and a separate TatA complex, containing only TatA subunits. Substrates initially bind to the TatABC complex, which probably triggers association of the separate TatA complex to form the active translocon.

It localises to the cell inner membrane. In terms of biological role, part of the twin-arginine translocation (Tat) system that transports large folded proteins containing a characteristic twin-arginine motif in their signal peptide across membranes. TatA could form the protein-conducting channel of the Tat system. The polypeptide is Sec-independent protein translocase protein TatA (Acidovorax sp. (strain JS42)).